Consider the following 62-residue polypeptide: Short neurotoxin B (62 aa).

Residues 1–16 (RRCFNHPSSQPQTNKS) show a composition bias toward polar residues. Residues 1-21 (RRCFNHPSSQPQTNKSCPPGE) are disordered. 4 disulfide bridges follow: Cys-3–Cys-24, Cys-17–Cys-41, Cys-43–Cys-54, and Cys-55–Cys-60.

The protein belongs to the three-finger toxin family. Short-chain subfamily. Type I alpha-neurotoxin sub-subfamily. In terms of tissue distribution, expressed by the venom gland.

Its subcellular location is the secreted. Its function is as follows. Binds to muscle nicotinic acetylcholine receptor (nAChR) and inhibit acetylcholine from binding to the receptor, thereby impairing neuromuscular transmission. The sequence is that of Short neurotoxin B from Laticauda crockeri (Crocker's sea snake).